A 301-amino-acid chain; its full sequence is Acetyl-coenzyme A carboxylase carboxyl transferase subunit beta (301 aa).

A CoA carboxyltransferase N-terminal domain is found at 25 to 294; that stretch reads LWIKDPSTGE…NSDAPAPQKP (270 aa).

This sequence belongs to the AccD/PCCB family. In terms of assembly, acetyl-CoA carboxylase is a heterohexamer composed of biotin carboxyl carrier protein (AccB), biotin carboxylase (AccC) and two subunits each of ACCase subunit alpha (AccA) and ACCase subunit beta (AccD).

The protein resides in the cytoplasm. It carries out the reaction N(6)-carboxybiotinyl-L-lysyl-[protein] + acetyl-CoA = N(6)-biotinyl-L-lysyl-[protein] + malonyl-CoA. Its pathway is lipid metabolism; malonyl-CoA biosynthesis; malonyl-CoA from acetyl-CoA: step 1/1. Its function is as follows. Component of the acetyl coenzyme A carboxylase (ACC) complex. Biotin carboxylase (BC) catalyzes the carboxylation of biotin on its carrier protein (BCCP) and then the CO(2) group is transferred by the transcarboxylase to acetyl-CoA to form malonyl-CoA. The sequence is that of Acetyl-coenzyme A carboxylase carboxyl transferase subunit beta from Brucella abortus (strain 2308).